A 293-amino-acid polypeptide reads, in one-letter code: tRNA(His) guanylyltransferase (293 aa).

Mg(2+) contacts are provided by D29, G30, and D76. GTP contacts are provided by residues 29–34 (DGRGFT) and 75–76 (SD). Residues 226–252 (KKVSEEEAEEMSSSAVPEVKSKSQVEK) are disordered.

This sequence belongs to the tRNA(His) guanylyltransferase family. Mg(2+) serves as cofactor.

The enzyme catalyses a 5'-end ribonucleotide-tRNA(His) + GTP + ATP + H2O = a 5'-end phospho-guanosine-ribonucleotide-tRNA(His) + AMP + 2 diphosphate + H(+). Its function is as follows. Adds a GMP to the 5'-end of tRNA(His) after transcription and RNase P cleavage. This chain is tRNA(His) guanylyltransferase (rgt-1), found in Neurospora crassa (strain ATCC 24698 / 74-OR23-1A / CBS 708.71 / DSM 1257 / FGSC 987).